Consider the following 921-residue polypeptide: Translation initiation factor IF-2 (921 aa).

Residues 1 to 296 (MADQNTPGDK…PGPQKQRGRL (296 aa)) form a disordered region. The span at 80-89 (RPSGPRPSGG) shows a compositional bias: low complexity. The span at 117 to 183 (ARVRDLEERR…AKKRFGEGEA (67 aa)) shows a compositional bias: basic and acidic residues. Low complexity-rich tracts occupy residues 184-237 (PRPA…ARPA) and 248-257 (GRAPAAVAAG). Residues 417–586 (PRSPVVTVMG…MIALQADILD (170 aa)) enclose the tr-type G domain. The segment at 426 to 433 (GHVDHGKT) is G1. Residue 426–433 (GHVDHGKT) participates in GTP binding. The interval 451–455 (GITQH) is G2. The tract at residues 474–477 (DTPG) is G3. GTP-binding positions include 474-478 (DTPGH) and 528-531 (NKID). The tract at residues 528 to 531 (NKID) is G4. The tract at residues 564 to 566 (SAK) is G5.

The protein belongs to the TRAFAC class translation factor GTPase superfamily. Classic translation factor GTPase family. IF-2 subfamily.

Its subcellular location is the cytoplasm. Its function is as follows. One of the essential components for the initiation of protein synthesis. Protects formylmethionyl-tRNA from spontaneous hydrolysis and promotes its binding to the 30S ribosomal subunits. Also involved in the hydrolysis of GTP during the formation of the 70S ribosomal complex. This chain is Translation initiation factor IF-2, found in Bradyrhizobium sp. (strain ORS 278).